We begin with the raw amino-acid sequence, 133 residues long: Glutaredoxin-C4, chloroplastic (133 aa).

Over residues 1–13 (MGMAQSSSSSSRP) the composition is skewed to low complexity. Residues 1–25 (MGMAQSSSSSSRPSDSEQLEEPSKP) are disordered. The N-terminal 27 residues, 1-27 (MGMAQSSSSSSRPSDSEQLEEPSKPVM), are a transit peptide targeting the chloroplast. The Glutaredoxin domain occupies 29–129 (LDKAKEIVAS…PLLTEAGAIA (101 aa)). Residues Cys-49 and Cys-52 are joined by a disulfide bond.

Belongs to the glutaredoxin family. CPYC subfamily.

Its subcellular location is the plastid. It is found in the chloroplast. Functionally, has a glutathione-disulfide oxidoreductase activity in the presence of NADPH and glutathione reductase. Reduces low molecular weight disulfides and proteins. This is Glutaredoxin-C4, chloroplastic (GRXC4) from Oryza sativa subsp. japonica (Rice).